A 362-amino-acid chain; its full sequence is Prostaglandin F2-alpha receptor (362 aa).

Residues 1-31 (MSTNNSVQPVSPASELLSNTTCQLEEDLSIS) are Extracellular-facing. Residues Asn4 and Asn19 are each glycosylated (N-linked (GlcNAc...) asparagine). A helical membrane pass occupies residues 32-54 (FSIIFMTVGILSNSLAIAILMKA). Residues 55 to 69 (YQRFRQKYKSSFLLL) lie on the Cytoplasmic side of the membrane. A helical membrane pass occupies residues 70–90 (ASALVITDFFGHLINGTIAVF). The Extracellular segment spans residues 91 to 109 (VYASDKDWIYFDKSNILCS). Cys108 and Cys186 are disulfide-bonded. A helical transmembrane segment spans residues 110–131 (IFGICMVFSGLCPLFLGSLMAI). Over 132 to 152 (ERCIGVTKPIFHSTKITTKHV) the chain is Cytoplasmic. Residues 153-175 (KMMLSGVCFFAVFVALLPILGHR) form a helical membrane-spanning segment. Topologically, residues 176-198 (DYKIQASRTWCFYKTDQIKDWED) are extracellular. The helical transmembrane segment at 199-224 (RFYLLLFAFLGLLALGISFVCNAITG) threads the bilayer. The Cytoplasmic portion of the chain corresponds to 225 to 250 (ISLLKVKFRSQQHRQGRSHHFEMVIQ). The chain crosses the membrane as a helical span at residues 251–267 (LLGIMCVSCICWSPFLV). At 268-285 (TMASIGMNIQDFKDSCER) the chain is on the extracellular side. The helical transmembrane segment at 286-307 (TLFTLRMATWNQILDPWVYILL) threads the bilayer. The Cytoplasmic portion of the chain corresponds to 308–362 (RKAVLRNLYVCTRRCCGVHVISLHVWELSSIKNSLKVAAISDLPVTEKVTQQTST).

Belongs to the G-protein coupled receptor 1 family.

It localises to the cell membrane. Receptor for prostaglandin F2-alpha (PGF2-alpha). The activity of this receptor is mediated by G proteins which activate a phosphatidylinositol-calcium second messenger system. Initiates luteolysis in the corpus luteum. This Ovis aries (Sheep) protein is Prostaglandin F2-alpha receptor (PTGFR).